Here is a 257-residue protein sequence, read N- to C-terminus: Pyridoxine 5'-phosphate synthase (257 aa).

Asn6 contributes to the 3-amino-2-oxopropyl phosphate binding site. A 1-deoxy-D-xylulose 5-phosphate-binding site is contributed by 8–9 (DH). Arg17 contacts 3-amino-2-oxopropyl phosphate. His41 functions as the Proton acceptor in the catalytic mechanism. The 1-deoxy-D-xylulose 5-phosphate site is built by Arg43 and His48. Glu68 (proton acceptor) is an active-site residue. A 1-deoxy-D-xylulose 5-phosphate-binding site is contributed by Thr98. His210 functions as the Proton donor in the catalytic mechanism. 3-amino-2-oxopropyl phosphate-binding positions include Gly211 and 232–233 (GQ).

This sequence belongs to the PNP synthase family. As to quaternary structure, homooctamer; tetramer of dimers.

The protein localises to the cytoplasm. The enzyme catalyses 3-amino-2-oxopropyl phosphate + 1-deoxy-D-xylulose 5-phosphate = pyridoxine 5'-phosphate + phosphate + 2 H2O + H(+). Its pathway is cofactor biosynthesis; pyridoxine 5'-phosphate biosynthesis; pyridoxine 5'-phosphate from D-erythrose 4-phosphate: step 5/5. Functionally, catalyzes the complicated ring closure reaction between the two acyclic compounds 1-deoxy-D-xylulose-5-phosphate (DXP) and 3-amino-2-oxopropyl phosphate (1-amino-acetone-3-phosphate or AAP) to form pyridoxine 5'-phosphate (PNP) and inorganic phosphate. The polypeptide is Pyridoxine 5'-phosphate synthase (Campylobacter jejuni subsp. jejuni serotype O:2 (strain ATCC 700819 / NCTC 11168)).